The sequence spans 67 residues: DNA gyrase inhibitor YacG (67 aa).

Positions 10, 13, 29, and 33 each coordinate Zn(2+).

Belongs to the DNA gyrase inhibitor YacG family. Interacts with GyrB. It depends on Zn(2+) as a cofactor.

Its function is as follows. Inhibits all the catalytic activities of DNA gyrase by preventing its interaction with DNA. Acts by binding directly to the C-terminal domain of GyrB, which probably disrupts DNA binding by the gyrase. The sequence is that of DNA gyrase inhibitor YacG from Pasteurella multocida (strain Pm70).